The chain runs to 264 residues: Probable transcriptional regulatory protein PPA1157 (264 aa).

Belongs to the TACO1 family.

Its subcellular location is the cytoplasm. The sequence is that of Probable transcriptional regulatory protein PPA1157 from Cutibacterium acnes (strain DSM 16379 / KPA171202) (Propionibacterium acnes).